A 311-amino-acid polypeptide reads, in one-letter code: tRNA-cytidine(32) 2-sulfurtransferase (311 aa).

The short motif at 47–52 is the PP-loop motif element; it reads SGGKDS. [4Fe-4S] cluster-binding residues include C122, C125, and C213.

The protein belongs to the TtcA family. In terms of assembly, homodimer. It depends on Mg(2+) as a cofactor. The cofactor is [4Fe-4S] cluster.

Its subcellular location is the cytoplasm. The enzyme catalyses cytidine(32) in tRNA + S-sulfanyl-L-cysteinyl-[cysteine desulfurase] + AH2 + ATP = 2-thiocytidine(32) in tRNA + L-cysteinyl-[cysteine desulfurase] + A + AMP + diphosphate + H(+). It participates in tRNA modification. Functionally, catalyzes the ATP-dependent 2-thiolation of cytidine in position 32 of tRNA, to form 2-thiocytidine (s(2)C32). The sulfur atoms are provided by the cysteine/cysteine desulfurase (IscS) system. The polypeptide is tRNA-cytidine(32) 2-sulfurtransferase (Salmonella heidelberg (strain SL476)).